Reading from the N-terminus, the 398-residue chain is Tryptophan synthase beta chain (398 aa).

The residue at position 92 (lysine 92) is an N6-(pyridoxal phosphate)lysine.

This sequence belongs to the TrpB family. As to quaternary structure, tetramer of two alpha and two beta chains. Pyridoxal 5'-phosphate is required as a cofactor.

The catalysed reaction is (1S,2R)-1-C-(indol-3-yl)glycerol 3-phosphate + L-serine = D-glyceraldehyde 3-phosphate + L-tryptophan + H2O. The protein operates within amino-acid biosynthesis; L-tryptophan biosynthesis; L-tryptophan from chorismate: step 5/5. Functionally, the beta subunit is responsible for the synthesis of L-tryptophan from indole and L-serine. The sequence is that of Tryptophan synthase beta chain from Nitrosospira multiformis (strain ATCC 25196 / NCIMB 11849 / C 71).